The sequence spans 85 residues: UPF0386 protein Arad_1912 (85 aa).

This sequence belongs to the UPF0386 family.

The protein is UPF0386 protein Arad_1912 of Rhizobium rhizogenes (strain K84 / ATCC BAA-868) (Agrobacterium radiobacter).